The sequence spans 631 residues: uncharacterized protein (631 aa).

Positions 1 to 20 are cleaved as a signal peptide; it reads MVRFVSILSLFGCAATLVTA. Over 21 to 105 the chain is Lumenal; sequence HDDMDMDMDM…AGNRSALRYH (85 aa). N-linked (GlcNAc...) asparagine glycans are attached at residues N87 and N98. The chain crosses the membrane as a helical span at residues 106 to 126; it reads IITLLLVAFVLYPVSLALSAA. The Cytoplasmic segment spans residues 127–131; it reads RSRWY. A helical transmembrane segment spans residues 132-152; the sequence is LPLLFVNLCICISSVMALSVF. Topologically, residues 153 to 170 are lumenal; it reads KNTFPEEDWYAHNIYGTT. A helical transmembrane segment spans residues 171-191; sequence SVLLLVFMLVHFFAAVLSVPV. Topologically, residues 192 to 322 are cytoplasmic; it reads SLASKKEYRP…LSCVANVVFH (131 aa). The disordered stretch occupies residues 216 to 274; that stretch reads MVNSARGSPSPSSNRDTLFSLSSDTTTATATNNNKRRRAEGEDEGDNTSNHDTLRDEDY. The residue at position 219 (S219) is a Phosphoserine. The segment covering 220-239 has biased composition (polar residues); sequence ARGSPSPSSNRDTLFSLSSD. K250 participates in a covalent cross-link: Glycyl lysine isopeptide (Lys-Gly) (interchain with G-Cter in ubiquitin). The chain crosses the membrane as a helical span at residues 323-343; that stretch reads MLTYPLFMYIFVDLIIGFAVG. At 344–351 the chain is on the lumenal side; sequence NLLGKGIR. Residues 352-372 form a helical membrane-spanning segment; that stretch reads IFNLLAHWIKGGVFFTLGVVS. Residues 373–407 lie on the Cytoplasmic side of the membrane; sequence LARYCGFAAKYGWAWNNISFTSQLTQTRSSNLLFR. The helical transmembrane segment at 408-428 threads the bilayer; sequence FAPAGTFTMEFVESFLIFFYG. Topologically, residues 429–451 are lumenal; it reads STNIFLEHLAGNGGAWTAKDLQH. The helical transmembrane segment at 452–472 threads the bilayer; the sequence is VSIAFMFIGTGLCGLLTEYKL. Over 473–529 the chain is Cytoplasmic; the sequence is NHWRFEHARKRPQTDVVAATPGYSPNPFPAFTIFWTGILMSQHAQSSQFSTTIHTQW. The chain crosses the membrane as a helical span at residues 530–550; sequence GYLLSYGSFFRLLTFLILFLV. The Lumenal segment spans residues 551–598; sequence PNTNSAASKPFTELITSFCLLCGGLVFMESTDQSIEAMEYRGFTPMFT. The helical transmembrane segment at 599-619 threads the bilayer; it reads FNLSVGFVSLLMAWEMILFIW. The Cytoplasmic portion of the chain corresponds to 620–631; sequence KDWLIKTRKTSL.

It to S.pombe SpBC3B8.06.

The protein resides in the membrane. This is an uncharacterized protein from Saccharomyces cerevisiae (strain ATCC 204508 / S288c) (Baker's yeast).